Consider the following 194-residue polypeptide: Protein GrpE (194 aa).

A compositionally biased stretch (basic and acidic residues) spans 1–14 (MSKMNPNEKKENAS). A disordered region spans residues 1–48 (MSKMNPNEKKENASKNENVNNEEATNLQEEQSNAADEAAGSDNVSGEV). The span at 24 to 34 (ATNLQEEQSNA) shows a compositional bias: polar residues.

Belongs to the GrpE family. Homodimer.

Its subcellular location is the cytoplasm. Functionally, participates actively in the response to hyperosmotic and heat shock by preventing the aggregation of stress-denatured proteins, in association with DnaK and GrpE. It is the nucleotide exchange factor for DnaK and may function as a thermosensor. Unfolded proteins bind initially to DnaJ; upon interaction with the DnaJ-bound protein, DnaK hydrolyzes its bound ATP, resulting in the formation of a stable complex. GrpE releases ADP from DnaK; ATP binding to DnaK triggers the release of the substrate protein, thus completing the reaction cycle. Several rounds of ATP-dependent interactions between DnaJ, DnaK and GrpE are required for fully efficient folding. This chain is Protein GrpE, found in Parabacteroides distasonis (strain ATCC 8503 / DSM 20701 / CIP 104284 / JCM 5825 / NCTC 11152).